The following is a 67-amino-acid chain: Andropin (67 aa).

The N-terminal stretch at 1–19 (MKYFLVLVVLTLILAISVG) is a signal peptide.

The protein belongs to the andropin family. In terms of tissue distribution, ejaculatory duct of adult males.

Its subcellular location is the secreted. Functionally, male-specific peptide with moderate activity against Gram-positive bacteria. This Drosophila orena (Fruit fly) protein is Andropin (Anp).